Reading from the N-terminus, the 356-residue chain is DNA-directed RNA polymerase subunit alpha (356 aa).

The alpha N-terminal domain (alpha-NTD) stretch occupies residues 1–230 (MNLHRISSEP…DLLKPLLKVE (230 aa)). The alpha C-terminal domain (alpha-CTD) stretch occupies residues 267-356 (IDQPLLPADS…IRKSYGHILG (90 aa)).

Belongs to the RNA polymerase alpha chain family. In terms of assembly, in plastids the minimal PEP RNA polymerase catalytic core is composed of four subunits: alpha, beta, beta', and beta''. When a (nuclear-encoded) sigma factor is associated with the core the holoenzyme is formed, which can initiate transcription.

Its subcellular location is the plastid. It is found in the chloroplast. The enzyme catalyses RNA(n) + a ribonucleoside 5'-triphosphate = RNA(n+1) + diphosphate. Its function is as follows. DNA-dependent RNA polymerase catalyzes the transcription of DNA into RNA using the four ribonucleoside triphosphates as substrates. The protein is DNA-directed RNA polymerase subunit alpha of Zygnema circumcarinatum (Green alga).